Consider the following 150-residue polypeptide: Large ribosomal subunit protein uL13 (150 aa).

This sequence belongs to the universal ribosomal protein uL13 family. In terms of assembly, part of the 50S ribosomal subunit.

In terms of biological role, this protein is one of the early assembly proteins of the 50S ribosomal subunit, although it is not seen to bind rRNA by itself. It is important during the early stages of 50S assembly. The protein is Large ribosomal subunit protein uL13 of Chlamydia caviae (strain ATCC VR-813 / DSM 19441 / 03DC25 / GPIC) (Chlamydophila caviae).